The following is a 464-amino-acid chain: NADH-ubiquinone oxidoreductase chain 4 (464 aa).

Helical transmembrane passes span leucine 18–threonine 38, isoleucine 54–tryptophan 74, serine 79–cysteine 99, methionine 102–leucine 122, alanine 131–glycine 151, valine 168–valine 188, proline 207–isoleucine 227, valine 239–isoleucine 259, leucine 266–leucine 286, leucine 297–isoleucine 317, glycine 332–isoleucine 352, threonine 375–valine 395, and leucine 420–isoleucine 440.

It belongs to the complex I subunit 4 family.

The protein resides in the mitochondrion membrane. The enzyme catalyses a ubiquinone + NADH + 5 H(+)(in) = a ubiquinol + NAD(+) + 4 H(+)(out). Functionally, core subunit of the mitochondrial membrane respiratory chain NADH dehydrogenase (Complex I) that is believed to belong to the minimal assembly required for catalysis. Complex I functions in the transfer of electrons from NADH to the respiratory chain. The immediate electron acceptor for the enzyme is believed to be ubiquinone. In Candida albicans (strain SC5314 / ATCC MYA-2876) (Yeast), this protein is NADH-ubiquinone oxidoreductase chain 4 (NAD4).